A 292-amino-acid polypeptide reads, in one-letter code: Pyruvate formate-lyase 2-activating enzyme (292 aa).

In terms of domain architecture, Radical SAM core spans 33-287 (NDGEGIRTVV…REMAERAGLQ (255 aa)). [4Fe-4S] cluster contacts are provided by Cys47, Cys51, and Cys54. 53–55 (WCA) contacts S-adenosyl-L-methionine. The 4Fe-4S ferredoxin-type domain occupies 62 to 96 (GKIQTVRREAKCLHCAKCLRDADECPSGAFERIGR). S-adenosyl-L-methionine is bound by residues Gly126, 175 to 177 (DLK), and His247.

Belongs to the organic radical-activating enzymes family. [4Fe-4S] cluster serves as cofactor.

The protein resides in the cytoplasm. The catalysed reaction is glycyl-[formate C-acetyltransferase] + reduced [flavodoxin] + S-adenosyl-L-methionine = glycin-2-yl radical-[formate C-acetyltransferase] + semiquinone [flavodoxin] + 5'-deoxyadenosine + L-methionine + H(+). Activation of pyruvate formate-lyase 2 under anaerobic conditions by generation of an organic free radical, using S-adenosylmethionine and reduced flavodoxin as cosubstrates to produce 5'-deoxy-adenosine. This Escherichia coli (strain K12) protein is Pyruvate formate-lyase 2-activating enzyme (pflC).